Reading from the N-terminus, the 72-residue chain is Crustacean hyperglycemic hormone (72 aa).

Residue Q1 is modified to Pyrrolidone carboxylic acid. F3 is modified (D-phenylalanine; in form CHH-II). 3 disulfide bridges follow: C7-C43, C23-C39, and C26-C52. Residue V72 is modified to Valine amide.

Stereoinversion of L-Phe (in CHH-I) to D-Phe (in CHH-II) the two forms are present in a ratio 3:1 (CHH-I/CHH-II). As to expression, produced by the medulla terminalis X-organ in the eyestalks and transported to the sinus gland where they are stored and released.

The protein resides in the secreted. Its function is as follows. Hormone found in the sinus gland of isopods and decapods which controls the blood sugar level. Has a secretagogue action over the amylase released from the midgut gland. May act as a stress hormone and may be involved in the control of molting and reproduction. The protein is Crustacean hyperglycemic hormone of Procambarus bouvieri (Mexican crayfish).